Here is a 418-residue protein sequence, read N- to C-terminus: Serine hydroxymethyltransferase (418 aa).

(6S)-5,6,7,8-tetrahydrofolate-binding positions include leucine 121 and glycine 125–leucine 127. Lysine 230 carries the N6-(pyridoxal phosphate)lysine modification. Serine 356–phenylalanine 358 contributes to the (6S)-5,6,7,8-tetrahydrofolate binding site.

It belongs to the SHMT family. As to quaternary structure, homodimer. It depends on pyridoxal 5'-phosphate as a cofactor.

The protein localises to the cytoplasm. It catalyses the reaction (6R)-5,10-methylene-5,6,7,8-tetrahydrofolate + glycine + H2O = (6S)-5,6,7,8-tetrahydrofolate + L-serine. Its pathway is one-carbon metabolism; tetrahydrofolate interconversion. It functions in the pathway amino-acid biosynthesis; glycine biosynthesis; glycine from L-serine: step 1/1. Catalyzes the reversible interconversion of serine and glycine with tetrahydrofolate (THF) serving as the one-carbon carrier. This reaction serves as the major source of one-carbon groups required for the biosynthesis of purines, thymidylate, methionine, and other important biomolecules. Also exhibits THF-independent aldolase activity toward beta-hydroxyamino acids, producing glycine and aldehydes, via a retro-aldol mechanism. The protein is Serine hydroxymethyltransferase of Shewanella halifaxensis (strain HAW-EB4).